Here is a 273-residue protein sequence, read N- to C-terminus: Large ribosomal subunit protein uL2cz/uL2cy (273 aa).

Disordered stretches follow at residues 1–24 (MAIHLYKTSTPSTRKGAVDSQAKS) and 224–254 (NPVDHPHGGGEGRAPIGRKKPTTPWGYPALG).

Belongs to the universal ribosomal protein uL2 family. In terms of assembly, part of the 50S ribosomal subunit.

Its subcellular location is the plastid. The protein localises to the chloroplast. This is Large ribosomal subunit protein uL2cz/uL2cy (rpl2-A) from Nymphaea alba (White water-lily).